Reading from the N-terminus, the 63-residue chain is Large ribosomal subunit protein uL29 (63 aa).

Belongs to the universal ribosomal protein uL29 family.

In Aliarcobacter butzleri (strain RM4018) (Arcobacter butzleri), this protein is Large ribosomal subunit protein uL29.